The sequence spans 49 residues: U1-theraphotoxin-Lp1b (49 aa).

4 disulfides stabilise this stretch: Cys4-Cys17, Cys8-Cys41, Cys22-Cys24, and Cys35-Cys46.

In terms of tissue distribution, expressed by the venom gland.

It localises to the secreted. In terms of biological role, toxin that causes irreversible contractile paralysis into adult Aedes aegypti resulting in 100% mortality after 24 hours. This is U1-theraphotoxin-Lp1b from Lasiodora parahybana (Brazilian salmon pink birdeater).